Consider the following 386-residue polypeptide: uncharacterized protein (386 aa).

2 consecutive transmembrane segments (helical) span residues 54–74 (AVLQMIDPPALVGCIAQAIVA) and 347–367 (LLGGIPLAGFFAAGEIGPIAG).

This sequence to M.tuberculosis Rv0628c.

The protein resides in the cell membrane. This is an uncharacterized protein from Mycobacterium tuberculosis (strain CDC 1551 / Oshkosh).